We begin with the raw amino-acid sequence, 823 residues long: Protein FAM193B (823 aa).

4 disordered regions span residues Met-1–Ser-78, Ser-158–Asp-191, Ser-209–Pro-281, and Cys-381–Asp-409. A compositionally biased stretch (pro residues) spans Pro-26 to Ser-36. Residues Pro-52–Lys-64 are compositionally biased toward basic and acidic residues. Low complexity-rich tracts occupy residues Ser-168–Ser-184 and Ser-263–Pro-281. Acidic residues predominate over residues Glu-382–Ser-393. Residues Gly-422–Lys-484 adopt a coiled-coil conformation. Disordered regions lie at residues Phe-503–Gly-583 and Trp-599–Met-775. 2 stretches are compositionally biased toward polar residues: residues Leu-516 to Glu-526 and Gln-641 to Pro-657. Ser-694, Ser-706, and Ser-813 each carry phosphoserine.

It belongs to the FAM193 family.

The protein resides in the cytoplasm. The protein localises to the nucleus. The protein is Protein FAM193B (FAM193B) of Bos taurus (Bovine).